Consider the following 163-residue polypeptide: Photosystem II extrinsic protein V (163 aa).

A signal peptide spans 1-26 (MLKKCVWLAVALCLCLWQFTMGTALA). Positions 67 and 118 each coordinate heme c.

The protein belongs to the cytochrome c family. PsbV subfamily. PSII is composed of 1 copy each of membrane proteins PsbA, PsbB, PsbC, PsbD, PsbE, PsbF, PsbH, PsbI, PsbJ, PsbK, PsbL, PsbM, PsbT, PsbX, PsbY, PsbZ, Psb30/Ycf12, peripheral proteins PsbO, CyanoQ (PsbQ), PsbU, PsbV and a large number of cofactors. It forms dimeric complexes. Heme c is required as a cofactor.

It localises to the cellular thylakoid membrane. Functionally, one of the extrinsic, lumenal subunits of photosystem II (PSII). PSII is a light-driven water plastoquinone oxidoreductase, using light energy to abstract electrons from H(2)O, generating a proton gradient subsequently used for ATP formation. The extrinsic proteins stabilize the structure of photosystem II oxygen-evolving complex (OEC), the ion environment of oxygen evolution and protect the OEC against heat-induced inactivation. Low-potential cytochrome c that plays a role in the OEC of PSII. This Thermosynechococcus vestitus (strain NIES-2133 / IAM M-273 / BP-1) protein is Photosystem II extrinsic protein V.